A 213-amino-acid chain; its full sequence is Putative amidate substrates transporter protein (213 aa).

A run of 6 helical transmembrane segments spans residues 4–20, 32–48, 56–72, 116–132, 146–162, and 172–188; these read VGLFYVGAVLIIDGLML, LNFFVGGLQVVTPTVLI, AVIFAASGLYLFGFTYL, VIWLLWAVLWFMLFLLL, VAVAEGVITAAVPAFLI, and LPAAVIAVIGFAAVVLA.

This sequence belongs to the AmiS/UreI family.

It localises to the cell membrane. Possible transporter that might be responsible for the adsorption of amidase substrates or release of their hydrolysis products. This is Putative amidate substrates transporter protein from Mycolicibacterium smegmatis (Mycobacterium smegmatis).